A 776-amino-acid chain; its full sequence is Ribosomal biogenesis protein LAS1L (776 aa).

The segment covering 185-227 has biased composition (acidic residues); sequence DEDQLDAEDPEEEEREIIADDVLEEIPEPQDDDKDEELAVEDD. Positions 185–247 are disordered; that stretch reads DEDQLDAEDP…SHPEPSSRHK (63 aa). Residues 228 to 247 show a composition bias toward basic and acidic residues; it reads ANTKGNEEVASHPEPSSRHK. 2 positions are modified to phosphoserine: serine 425 and serine 509. The tract at residues 501 to 646 is disordered; it reads KAIEGSSSSS…DYDDDEEEDR (146 aa). Residues 544–557 show a composition bias toward basic and acidic residues; that stretch reads GNLKDVKQEEKKEN. 2 stretches are compositionally biased toward acidic residues: residues 558–602 and 611–646; these read EEEE…EEEE and MEADVEESDDVEEEEEVDDEEEDEDDDYDDDEEEDR. Serine 658 bears the Phosphoserine mark. The interval 677-696 is interaction with NOL9; that stretch reads SAWQVSSEDVRWGTFPLGRL. The interval 733–759 is disordered; it reads SSTLSLCCGGSNTNSSSSSSSGNMEGL. Residues 741 to 755 are compositionally biased toward low complexity; the sequence is GGSNTNSSSSSSSGN.

It belongs to the LAS1 family. Component of some MLL1/MLL complex, at least composed of the core components KMT2A/MLL1, ASH2L, HCFC1/HCF1, WDR5 and RBBP5, as well as the facultative components BACC1, CHD8, E2F6, HSP70, INO80C, KANSL1, LAS1L, MAX, MCRS1, MGA, MYST1/MOF, PELP1, PHF20, PRP31, RING2, RUVB1/TIP49A, RUVB2/TIP49B, SENP3, TAF1, TAF4, TAF6, TAF7, TAF9 and TEX10. Component of the 5FMC complex, at least composed of PELP1, LAS1L, TEX10, WDR18 and SENP3; the complex interacts with methylated CHTOP and ZNF148. Interacts with NOL9 to form an ITS2 pre-rRNA endonuclease-kinase complex.

It localises to the nucleus. It is found in the nucleolus. The protein localises to the nucleoplasm. Its subcellular location is the cytoplasm. Required for the synthesis of the 60S ribosomal subunit and maturation of the 28S rRNA. Functions as a component of the Five Friends of Methylated CHTOP (5FMC) complex; the 5FMC complex is recruited to ZNF148 by methylated CHTOP, leading to desumoylation of ZNF148 and subsequent transactivation of ZNF148 target genes. Required for the efficient pre-rRNA processing at both ends of internal transcribed spacer 2 (ITS2). This Mus musculus (Mouse) protein is Ribosomal biogenesis protein LAS1L (Las1l).